Reading from the N-terminus, the 404-residue chain is CCA-adding enzyme (404 aa).

Residues Gly32 and Arg35 each contribute to the ATP site. Positions 32 and 35 each coordinate CTP. 2 residues coordinate Mg(2+): Asp45 and Asp47. ATP-binding residues include Arg116, Asp159, Arg162, Arg165, and Arg168. Positions 116, 159, 162, 165, and 168 each coordinate CTP.

Belongs to the tRNA nucleotidyltransferase/poly(A) polymerase family. Bacterial CCA-adding enzyme type 3 subfamily. As to quaternary structure, homodimer. Requires Mg(2+) as cofactor.

The enzyme catalyses a tRNA precursor + 2 CTP + ATP = a tRNA with a 3' CCA end + 3 diphosphate. The catalysed reaction is a tRNA with a 3' CCA end + 2 CTP + ATP = a tRNA with a 3' CCACCA end + 3 diphosphate. Functionally, catalyzes the addition and repair of the essential 3'-terminal CCA sequence in tRNAs without using a nucleic acid template. Adds these three nucleotides in the order of C, C, and A to the tRNA nucleotide-73, using CTP and ATP as substrates and producing inorganic pyrophosphate. tRNA 3'-terminal CCA addition is required both for tRNA processing and repair. Also involved in tRNA surveillance by mediating tandem CCA addition to generate a CCACCA at the 3' terminus of unstable tRNAs. While stable tRNAs receive only 3'-terminal CCA, unstable tRNAs are marked with CCACCA and rapidly degraded. This is CCA-adding enzyme from Ligilactobacillus salivarius (strain UCC118) (Lactobacillus salivarius).